A 193-amino-acid chain; its full sequence is Ion-translocating oxidoreductase complex subunit A (193 aa).

A run of 6 helical transmembrane segments spans residues 5 to 25 (FFFI…FLGL), 47 to 67 (FVVV…LLPF), 72 to 92 (LRII…EIIL), 102 to 122 (ILGI…IPLF), 134 to 154 (ILYA…FSSI), and 171 to 191 (PIVL…KGLV).

It belongs to the NqrDE/RnfAE family. In terms of assembly, the complex is composed of six subunits: RnfA, RnfB, RnfC, RnfD, RnfE and RnfG.

The protein localises to the cell inner membrane. Functionally, part of a membrane-bound complex that couples electron transfer with translocation of ions across the membrane. This is Ion-translocating oxidoreductase complex subunit A from Buchnera aphidicola subsp. Schizaphis graminum (strain Sg).